The primary structure comprises 99 residues: MARITVEDCLEVVNNRFELVMMASKRARQLANGVQPLIENAAASDKPTVMALREIAARRIDNALIDEVEKAERERAEREALEWAAAEVVADEDMSKNDD.

The protein belongs to the RNA polymerase subunit omega family. The RNAP catalytic core consists of 2 alpha, 1 beta, 1 beta' and 1 omega subunit. When a sigma factor is associated with the core the holoenzyme is formed, which can initiate transcription.

The enzyme catalyses RNA(n) + a ribonucleoside 5'-triphosphate = RNA(n+1) + diphosphate. In terms of biological role, promotes RNA polymerase assembly. Latches the N- and C-terminal regions of the beta' subunit thereby facilitating its interaction with the beta and alpha subunits. In Xanthomonas oryzae pv. oryzae (strain MAFF 311018), this protein is DNA-directed RNA polymerase subunit omega.